We begin with the raw amino-acid sequence, 56 residues long: Conotoxin Cal6.41a (56 aa).

Positions 1-23 (MSGSGAMLLGLLILVAMATSLDT) are cleaved as a signal peptide. 3 cysteine pairs are disulfide-bonded: Cys-27–Cys-41, Cys-33–Cys-50, and Cys-40–Cys-54.

In terms of tissue distribution, expressed by the venom duct.

It localises to the secreted. Probable neurotoxin. In Californiconus californicus (California cone), this protein is Conotoxin Cal6.41a.